The chain runs to 406 residues: MNDADIHKELFQHTKELADHYLLNTYARYDVAFRYGVNELLFDFDNKQYIDFHCGVAVTNLGHADPDIIEVVRSQADKLFHTSNLFYSEEASKLAELLILNSFPGKVFLTNSGTEAIEGAFKLARKYAYSKSIVDPIILSLEKSFHGRSVSGMSLTGQDKIRKGYGELLKGIEFIEPNNDEALVAAFERYQGRIVALIEEPILGESGIIPLSRNFLTLSRELTEENEALLIFDEIQTGMGRTGTLFAFETMGFSPDAMTLAKGLGSGFPIGALIVGEKYQDLFTQGSHGSTFGGNHLAAAVAYETIRIIQTREILNNVNICSDIAFTRLREMQEKYPVISEVRGKGLHIGLELKVPSKPIAEACLSAGLVVNATADNVVRIMPPLTISTDFLNQGLDILESVLKQN.

Residues 113-114 and phenylalanine 145 each bind pyridoxal 5'-phosphate; that span reads GT. Residue arginine 148 coordinates N(2)-acetyl-L-ornithine. Pyridoxal 5'-phosphate is bound at residue 233-236; that stretch reads DEIQ. Position 262 is an N6-(pyridoxal phosphate)lysine (lysine 262). Position 290 (serine 290) interacts with N(2)-acetyl-L-ornithine. Pyridoxal 5'-phosphate is bound at residue threonine 291.

The protein belongs to the class-III pyridoxal-phosphate-dependent aminotransferase family. ArgD subfamily. In terms of assembly, homodimer. Requires pyridoxal 5'-phosphate as cofactor.

The protein localises to the cytoplasm. The enzyme catalyses N(2)-acetyl-L-ornithine + 2-oxoglutarate = N-acetyl-L-glutamate 5-semialdehyde + L-glutamate. It functions in the pathway amino-acid biosynthesis; L-arginine biosynthesis; N(2)-acetyl-L-ornithine from L-glutamate: step 4/4. The chain is Acetylornithine aminotransferase from Leptospira interrogans serogroup Icterohaemorrhagiae serovar Lai (strain 56601).